Here is a 463-residue protein sequence, read N- to C-terminus: Chaperone SurA (463 aa).

A signal peptide spans 1-25 (MTKPFSVVLASLLAITSTISPLASA). PpiC domains follow at residues 174–276 (GSKY…KLME) and 289–388 (VTEY…QRVG). Disordered regions lie at residues 329 to 348 (ATAK…GDLG) and 434 to 463 (GDRA…KPTR). Residues 439–452 (NNATAAPAKSADPA) show a composition bias toward low complexity. The span at 453–463 (LPAPPPAKPTR) shows a compositional bias: pro residues.

Its subcellular location is the periplasm. It catalyses the reaction [protein]-peptidylproline (omega=180) = [protein]-peptidylproline (omega=0). Functionally, chaperone involved in the correct folding and assembly of outer membrane proteins. Recognizes specific patterns of aromatic residues and the orientation of their side chains, which are found more frequently in integral outer membrane proteins. May act in both early periplasmic and late outer membrane-associated steps of protein maturation. The sequence is that of Chaperone SurA from Xanthomonas oryzae pv. oryzae (strain KACC10331 / KXO85).